Consider the following 583-residue polypeptide: Leucine aminopeptidase 2, chloroplastic (583 aa).

The transit peptide at 1 to 70 (MAVTLVTSFA…ISHATLGLTQ (70 aa)) directs the protein to the chloroplast. Residues Lys351 and Asp356 each contribute to the Mn(2+) site. Residue Lys363 is part of the active site. The Mn(2+) site is built by Asp376, Asp436, and Glu438. The active site involves Arg440.

This sequence belongs to the peptidase M17 family. Homohexamer (dimer of homotrimers). The cofactor is Mn(2+).

Its subcellular location is the plastid. It localises to the chloroplast. The enzyme catalyses Release of an N-terminal amino acid, Xaa-|-Yaa-, in which Xaa is preferably Leu, but may be other amino acids including Pro although not Arg or Lys, and Yaa may be Pro. Amino acid amides and methyl esters are also readily hydrolyzed, but rates on arylamides are exceedingly low.. The catalysed reaction is Release of N-terminal proline from a peptide.. Presumably involved in the processing and regular turnover of intracellular proteins. Catalyzes the removal of unsubstituted N-terminal amino acids from various peptides. Possesses leucine aminopeptidase activity against the model substrate leucine-amido methyl coumarin. Does not seem to possess Cys-Gly dipeptidase activity. Functionally, functions as a molecular chaperone to protect proteins from heat-induced damage. The chain is Leucine aminopeptidase 2, chloroplastic from Arabidopsis thaliana (Mouse-ear cress).